We begin with the raw amino-acid sequence, 160 residues long: Small ribosomal subunit protein uS19v (160 aa).

Belongs to the universal ribosomal protein uS19 family.

Its subcellular location is the cytoplasm. In Arabidopsis thaliana (Mouse-ear cress), this protein is Small ribosomal subunit protein uS19v (RPS15F).